A 623-amino-acid polypeptide reads, in one-letter code: Arginine decarboxylase 2 (623 aa).

The residue at position 109 (K109) is an N6-(pyridoxal phosphate)lysine. 295–305 provides a ligand contact to substrate; sequence LDCGGGLGVDY.

It belongs to the Orn/Lys/Arg decarboxylase class-II family. SpeA subfamily. Pyridoxal 5'-phosphate serves as cofactor. Mg(2+) is required as a cofactor. As to expression, expressed in stems (at protein level).

The catalysed reaction is L-arginine + H(+) = agmatine + CO2. Its pathway is amine and polyamine biosynthesis; agmatine biosynthesis; agmatine from L-arginine: step 1/1. This Oryza sativa subsp. japonica (Rice) protein is Arginine decarboxylase 2 (ADC2).